The chain runs to 402 residues: UDP-glucose 6-dehydrogenase (402 aa).

NAD(+)-binding positions include 2–19 (KIAV…GVLL), valine 11, aspartate 29, lysine 34, threonine 83, threonine 118, and glutamate 145. Substrate contacts are provided by residues 141-145 (EFLRE), lysine 204, asparagine 208, 249-253 (YNNPS), and glycine 257. Tyrosine 259 contributes to the NAD(+) binding site. Cysteine 260 functions as the Nucleophile in the catalytic mechanism. Residue lysine 263 participates in NAD(+) binding. Residue lysine 320 participates in substrate binding. Arginine 327 is an NAD(+) binding site.

Belongs to the UDP-glucose/GDP-mannose dehydrogenase family.

The catalysed reaction is UDP-alpha-D-glucose + 2 NAD(+) + H2O = UDP-alpha-D-glucuronate + 2 NADH + 3 H(+). The protein operates within nucleotide-sugar biosynthesis; UDP-alpha-D-glucuronate biosynthesis; UDP-alpha-D-glucuronate from UDP-alpha-D-glucose: step 1/1. In terms of biological role, catalyzes the formation of UDP-glucuronic acid which is required for capsular hyaluronic acid synthesis. The chain is UDP-glucose 6-dehydrogenase (hasB) from Streptococcus pyogenes serotype M1.